The sequence spans 341 residues: Large ribosomal subunit protein uL3 (341 aa).

Disordered regions lie at residues 1–31 (MGHRKLSSPRRGSAGLRPRKRSEELLPSPRS) and 234–261 (HRKGSRKVGTKGPSLGTPSYVPQPGQMG).

It belongs to the universal ribosomal protein uL3 family. As to quaternary structure, part of the 50S ribosomal subunit. Forms a cluster with proteins L14 and L24e.

Functionally, one of the primary rRNA binding proteins, it binds directly near the 3'-end of the 23S rRNA, where it nucleates assembly of the 50S subunit. This is Large ribosomal subunit protein uL3 from Metallosphaera sedula (strain ATCC 51363 / DSM 5348 / JCM 9185 / NBRC 15509 / TH2).